A 267-amino-acid chain; its full sequence is Type II pantothenate kinase (267 aa).

6 to 13 provides a ligand contact to ATP; sequence DAGGTLIK. E70 (proton acceptor) is an active-site residue. ATP contacts are provided by residues T99, 121–125, Y137, and S225; that span reads GGMIQ.

It belongs to the type II pantothenate kinase family. Homodimer.

The protein localises to the cytoplasm. The enzyme catalyses (R)-pantothenate + ATP = (R)-4'-phosphopantothenate + ADP + H(+). The protein operates within cofactor biosynthesis; coenzyme A biosynthesis; CoA from (R)-pantothenate: step 1/5. Catalyzes the phosphorylation of pantothenate (Pan), the first step in CoA biosynthesis. This Staphylococcus aureus (strain USA300) protein is Type II pantothenate kinase.